The chain runs to 366 residues: tRNA/tmRNA (uracil-C(5))-methyltransferase (366 aa).

S-adenosyl-L-methionine contacts are provided by Q190, Y218, N223, E239, and D299. C324 serves as the catalytic Nucleophile. The active-site Proton acceptor is the E358.

It belongs to the class I-like SAM-binding methyltransferase superfamily. RNA M5U methyltransferase family. TrmA subfamily.

The catalysed reaction is uridine(54) in tRNA + S-adenosyl-L-methionine = 5-methyluridine(54) in tRNA + S-adenosyl-L-homocysteine + H(+). The enzyme catalyses uridine(341) in tmRNA + S-adenosyl-L-methionine = 5-methyluridine(341) in tmRNA + S-adenosyl-L-homocysteine + H(+). Its function is as follows. Dual-specificity methyltransferase that catalyzes the formation of 5-methyluridine at position 54 (m5U54) in all tRNAs, and that of position 341 (m5U341) in tmRNA (transfer-mRNA). This Escherichia coli O157:H7 (strain EC4115 / EHEC) protein is tRNA/tmRNA (uracil-C(5))-methyltransferase.